Here is a 238-residue protein sequence, read N- to C-terminus: Large ribosomal subunit protein bL17m (238 aa).

It belongs to the bacterial ribosomal protein bL17 family. Component of the mitochondrial large ribosomal subunit (mt-LSU). Mature yeast 74S mitochondrial ribosomes consist of a small (37S) and a large (54S) subunit. The 37S small subunit contains a 15S ribosomal RNA (15S mt-rRNA) and 34 different proteins. The 54S large subunit contains a 21S rRNA (21S mt-rRNA) and 46 different proteins.

It is found in the mitochondrion. Its function is as follows. Component of the mitochondrial ribosome (mitoribosome), a dedicated translation machinery responsible for the synthesis of mitochondrial genome-encoded proteins, including at least some of the essential transmembrane subunits of the mitochondrial respiratory chain. The mitoribosomes are attached to the mitochondrial inner membrane and translation products are cotranslationally integrated into the membrane. In Saccharomyces cerevisiae (strain ATCC 204508 / S288c) (Baker's yeast), this protein is Large ribosomal subunit protein bL17m (MRPL8).